Here is a 410-residue protein sequence, read N- to C-terminus: Interstrand DNA cross-link repair glycosylase (410 aa).

Residues Gln45 to Asp47 carry the QXD; important for activity motif.

Belongs to the DNA glycosylase AlkZ-like family.

In terms of biological role, DNA glycosylase involved in the repair of interstrand DNA cross-links (ICLs), which are highly toxic DNA lesions that covalently tether the opposing strands of DNA, thereby inhibiting essential cellular processes such as DNA replication and transcription. Acts by unhooking both sides of the ICLs, forming abasic (AP) sites on both strands. Unhooks ICLs derived from various cross-linking agents, including azinomycin B (AZB) and mechlorethamine, also known as nitrogen mustard (NM), protecting cells from the toxicity of these cross-linking agents. In vitro, also acts on monoadducts and can catalyze the excision of N7-methylguanine (7mGua) from an oligonucleotide containing N7-methyldeoxyguanosine (d7mG). Shows no unhooking activity toward FaPy-ICLs. This is Interstrand DNA cross-link repair glycosylase (ycaQ) from Escherichia coli (strain K12).